A 514-amino-acid chain; its full sequence is Bifunctional purine biosynthesis protein PurH (514 aa).

The region spanning 1 to 145 (MIKRALISVS…KNYQDVAVIV (145 aa)) is the MGS-like domain.

It belongs to the PurH family.

The enzyme catalyses (6R)-10-formyltetrahydrofolate + 5-amino-1-(5-phospho-beta-D-ribosyl)imidazole-4-carboxamide = 5-formamido-1-(5-phospho-D-ribosyl)imidazole-4-carboxamide + (6S)-5,6,7,8-tetrahydrofolate. It carries out the reaction IMP + H2O = 5-formamido-1-(5-phospho-D-ribosyl)imidazole-4-carboxamide. It participates in purine metabolism; IMP biosynthesis via de novo pathway; 5-formamido-1-(5-phospho-D-ribosyl)imidazole-4-carboxamide from 5-amino-1-(5-phospho-D-ribosyl)imidazole-4-carboxamide (10-formyl THF route): step 1/1. The protein operates within purine metabolism; IMP biosynthesis via de novo pathway; IMP from 5-formamido-1-(5-phospho-D-ribosyl)imidazole-4-carboxamide: step 1/1. This is Bifunctional purine biosynthesis protein PurH from Ruminiclostridium cellulolyticum (strain ATCC 35319 / DSM 5812 / JCM 6584 / H10) (Clostridium cellulolyticum).